A 396-amino-acid chain; its full sequence is uncharacterized protein (396 aa).

Helical transmembrane passes span 8-28 (TASG…ILAS), 44-64 (ISYV…ISGV), 73-93 (PLVV…PLSP), 97-117 (LAFV…AGTY), 133-153 (VLVK…ITFL), 158-178 (MFYG…IIYL), 213-233 (ALII…IWLP), 250-270 (LLSY…VLLN), 276-296 (VFIT…MLTV), 304-324 (ITAF…ITLM), 338-358 (IVAT…GLIA), and 363-383 (IAHI…AAAF).

Belongs to the major facilitator superfamily.

The protein resides in the cell membrane. This is an uncharacterized protein from Bacillus subtilis (strain 168).